A 92-amino-acid chain; its full sequence is MGRSLKKGPFIADSLLKKIEKLNASGDKQVIKTWSRASTILPQMVGHTIAVHNGRQHVPVFVSEQMVGHKLGEFAPTRTFKGHAKSDKKARR.

It belongs to the universal ribosomal protein uS19 family.

Functionally, protein S19 forms a complex with S13 that binds strongly to the 16S ribosomal RNA. In Picosynechococcus sp. (strain ATCC 27264 / PCC 7002 / PR-6) (Agmenellum quadruplicatum), this protein is Small ribosomal subunit protein uS19.